A 248-amino-acid chain; its full sequence is MKKLVLIRHGESTWNKENRFTGWTDVDLSDEGRQQATEAAEVLKREGYVFDVAYTSVLKRAIRTLWTVLDGMDLMWIPVHRSWRLNERHYGALQGLNKAETAAKFGEDQVKIWRRSYDIPPPVLTADDPRFPGHDPRYQSLTKEELPLTECLKDTVARFLPLWHDTIAPAIRSGQRVIIAAHGNSLRALVKYLDGVSEADIVELNIPTGMPLVYELDDDLKPLNRYYLGDPEKVKAAMEAVAAQGKKK.

Substrate-binding positions include 8–15, 21–22, Arg60, 87–90, Lys98, 114–115, and 183–184; these read RHGESTWN, TG, ERHY, RR, and GN. His9 functions as the Tele-phosphohistidine intermediate in the catalytic mechanism. Catalysis depends on Glu87, which acts as the Proton donor/acceptor.

This sequence belongs to the phosphoglycerate mutase family. BPG-dependent PGAM subfamily.

It catalyses the reaction (2R)-2-phosphoglycerate = (2R)-3-phosphoglycerate. It functions in the pathway carbohydrate degradation; glycolysis; pyruvate from D-glyceraldehyde 3-phosphate: step 3/5. Its function is as follows. Catalyzes the interconversion of 2-phosphoglycerate and 3-phosphoglycerate. The sequence is that of 2,3-bisphosphoglycerate-dependent phosphoglycerate mutase from Solibacter usitatus (strain Ellin6076).